The following is a 626-amino-acid chain: DNA mismatch repair protein MutL (626 aa).

Belongs to the DNA mismatch repair MutL/HexB family.

Its function is as follows. This protein is involved in the repair of mismatches in DNA. It is required for dam-dependent methyl-directed DNA mismatch repair. May act as a 'molecular matchmaker', a protein that promotes the formation of a stable complex between two or more DNA-binding proteins in an ATP-dependent manner without itself being part of a final effector complex. The sequence is that of DNA mismatch repair protein MutL from Chlorobium luteolum (strain DSM 273 / BCRC 81028 / 2530) (Pelodictyon luteolum).